Consider the following 201-residue polypeptide: Methylated-DNA--protein-cysteine methyltransferase (201 aa).

DNA contacts are provided by Tyr131, Gly132, and Arg146. Residue Cys163 is the Nucleophile; methyl group acceptor of the active site.

This sequence belongs to the MGMT family.

It is found in the nucleus. The enzyme catalyses a 6-O-methyl-2'-deoxyguanosine in DNA + L-cysteinyl-[protein] = S-methyl-L-cysteinyl-[protein] + a 2'-deoxyguanosine in DNA. It carries out the reaction a 4-O-methyl-thymidine in DNA + L-cysteinyl-[protein] = a thymidine in DNA + S-methyl-L-cysteinyl-[protein]. Its function is as follows. Involved in the cellular defense against the biological effects of O6-methylguanine (O6-MeG) and O4-methylthymine (O4-MeT) in DNA. Repairs the methylated nucleobase in DNA by stoichiometrically transferring the methyl group to a cysteine residue in the enzyme. This is a suicide reaction: the enzyme is irreversibly inactivated. This is Methylated-DNA--protein-cysteine methyltransferase (MGT1) from Lodderomyces elongisporus (strain ATCC 11503 / CBS 2605 / JCM 1781 / NBRC 1676 / NRRL YB-4239) (Yeast).